A 331-amino-acid polypeptide reads, in one-letter code: Adenosine deaminase (331 aa).

2 residues coordinate Zn(2+): H12 and H14. Positions 14, 16, and 170 each coordinate substrate. H197 is a Zn(2+) binding site. The Proton donor role is filled by E200. Zn(2+) is bound at residue D278.

The protein belongs to the metallo-dependent hydrolases superfamily. Adenosine and AMP deaminases family. Adenosine deaminase subfamily. Requires Zn(2+) as cofactor.

It catalyses the reaction adenosine + H2O + H(+) = inosine + NH4(+). The catalysed reaction is 2'-deoxyadenosine + H2O + H(+) = 2'-deoxyinosine + NH4(+). In terms of biological role, catalyzes the hydrolytic deamination of adenosine and 2-deoxyadenosine. The chain is Adenosine deaminase from Shewanella woodyi (strain ATCC 51908 / MS32).